The chain runs to 576 residues: MADLLGIVAIVFFYVLILVVGIWAGRKSKSSKELESEAGAATEEVMLAGRNIGTLVGIFTMTATWVGGAYINGTAEALYNGGLLGCQAPVGYAISLVMGGLLFAKKMREEGYITMLDPFQHKYGQRIGGLMYVPALLGETFWTAAILSALGATLSVILGIDMNASVTLSACIAVFYTFTGGYYAVAYTDVVQLFCIFVGLWVCVPAAMVHDGAKDISRNAGDWIGEIGGFKETSLWIDCMLLLVFGGIPWQVYFQRVLSSKTAHGAQTLSFVAGVGCILMAIPPALIGAIARNTDWRMTDYSPWNNGTKVESIPPDKRNMVVPLVFQYLTPRWVAFIGLGAVSAAVMSSADSSVLSAASMFAHNIWKLTIRPHASEKEVIIVMRIAIICVGIMATIMALTIQSIYGLWYLCADLVYVILFPQLLCVVYMPRSNTYGSLAGYAVGLVLRLIGGEPLVSLPAFFHYPMYTDGVQYFPFRTTAMLSSMATIYIVSIQSEKLFKSGRLSPEWDVMGCVVNIPIDHVPLPSDVSFAVSSETLNMKAPNGTPAPVHPNQQPSDENTLLHPYSDQSYYSTNSN.

The chain crosses the membrane as a helical span at residues Gly-6–Arg-26. Residues Lys-27–Asn-51 lie on the Cytoplasmic side of the membrane. The helical transmembrane segment at Ile-52 to Asn-72 threads the bilayer. At Gly-73–Gly-82 the chain is on the extracellular side. A helical transmembrane segment spans residues Leu-83–Phe-103. Residues Ala-104–Arg-126 lie on the Cytoplasmic side of the membrane. Residues Ile-127–Leu-147 form a helical membrane-spanning segment. Over Ser-148 to Ser-165 the chain is Extracellular. A helical transmembrane segment spans residues Val-166 to Ala-186. Residues Tyr-187–Gln-192 are Cytoplasmic-facing. The chain crosses the membrane as a helical span at residues Leu-193–Ala-213. Topologically, residues Lys-214–Thr-233 are extracellular. Residues Ser-234–Phe-254 form a helical membrane-spanning segment. At Gln-255–Ser-270 the chain is on the cytoplasmic side. Residues Phe-271–Ala-291 form a helical membrane-spanning segment. Residues Arg-292 to Asn-319 are Extracellular-facing. An N-linked (GlcNAc...) asparagine glycan is attached at Asn-306. Residues Met-320–Gly-340 form a helical membrane-spanning segment. The Cytoplasmic portion of the chain corresponds to Ala-341–Glu-378. Residues Val-379–Leu-399 form a helical membrane-spanning segment. The Extracellular segment spans residues Thr-400–Trp-408. Residues Tyr-409–Met-429 traverse the membrane as a helical segment. Residues Pro-430–Ser-437 lie on the Cytoplasmic side of the membrane. The helical transmembrane segment at Leu-438–Leu-458 threads the bilayer. The Extracellular portion of the chain corresponds to Pro-459 to Thr-478. The helical transmembrane segment at Thr-479–Phe-499 threads the bilayer. At Lys-500–Asn-576 the chain is on the cytoplasmic side. The interval Ala-541–Asn-576 is disordered. Residues Ser-566–Asn-576 are compositionally biased toward polar residues.

Belongs to the sodium:solute symporter (SSF) (TC 2.A.21) family. As to expression, detected in the nervous system, including the nerve ring and cholinergic motor neurons of the ventral nerve cord.

Its subcellular location is the membrane. In terms of biological role, imports choline from the extracellular space to the neuron with high affinity. Choline uptake is the rate-limiting step in acetylcholine synthesis. Sodium ion and chloride ion dependent. In Caenorhabditis elegans, this protein is High-affinity choline transporter 1 (cho-1).